We begin with the raw amino-acid sequence, 226 residues long: Small ribosomal subunit protein uS3 (226 aa).

In terms of domain architecture, KH type-2 spans 39-109 (IYKFFDKFTR…KLDVNLKVLT (71 aa)).

The protein belongs to the universal ribosomal protein uS3 family. Part of the 30S ribosomal subunit. Forms a tight complex with proteins S10 and S14.

Its function is as follows. Binds the lower part of the 30S subunit head. Binds mRNA in the 70S ribosome, positioning it for translation. This is Small ribosomal subunit protein uS3 from Mycoplasmopsis synoviae (strain 53) (Mycoplasma synoviae).